A 928-amino-acid chain; its full sequence is MYCBP-associated protein (928 aa).

Disordered stretches follow at residues 1-38 (MKKANDRQSPPKLLEKKRAKAPEQPTPPIQEEPEPVSN) and 164-183 (EEPKPKSPKEEKRPPWAPPL). A compositionally biased stretch (basic and acidic residues) spans 164–177 (EEPKPKSPKEEKRP). Residue Ser-557 is modified to Phosphoserine. Thr-558 carries the phosphothreonine modification. Residue Ser-564 is modified to Phosphoserine. Residues 786–881 (IPDEGQKSPP…SSATSQEPID (96 aa)) are disordered. A compositionally biased stretch (basic and acidic residues) spans 806 to 865 (LGKEDRRGGAQEKKQLSARDKEEKKGSKTPSKEDRLNSKKQKAKDDKKVVKSTSRDRLLS).

Interacts with MYCBP. In terms of tissue distribution, expressed in brain, retina, testis, heart and lung. Not detected in liver, kidney or intestine. In brain, highly abundant in CNS neurons of the hippocampus and cerebellum. Strongly expressed in cochlea and vestibular sensory epithelia. In both the organ of Corti and the vestibular organ, expression is restricted to hair cells.

The protein resides in the cytoplasm. The protein localises to the membrane. May play a role in spermatogenesis. May be involved in synaptic processes. The sequence is that of MYCBP-associated protein from Rattus norvegicus (Rat).